The sequence spans 358 residues: Bi-functional coumaroyl CoA and feruloyl CoA ortho-hydroxylase F6H2-2-1 (358 aa).

In terms of domain architecture, Fe2OG dioxygenase spans 200–308 (SKESLLMGSR…RISVPVFVNP (109 aa)). 2-oxoglutarate is bound at residue Tyr-216. Positions 231, 233, and 289 each coordinate Fe cation. 2 residues coordinate 2-oxoglutarate: Arg-299 and Ser-301.

The protein belongs to the iron/ascorbate-dependent oxidoreductase family. L-ascorbate is required as a cofactor. Fe(2+) serves as cofactor. Mostly expressed in underground stems and stems.

The catalysed reaction is (E)-4-coumaroyl-CoA + 2-oxoglutarate + O2 = (E)-2,4-dihydroxycinnamoyl-CoA + succinate + CO2. It carries out the reaction (E)-feruloyl-CoA + 2-oxoglutarate + O2 = (E)-6-hydroxyferuloyl-CoA + succinate + CO2. It functions in the pathway phenylpropanoid metabolism. In terms of biological role, 2-oxoglutarate (OG)- and Fe(II)-dependent dioxygenase (2OGD) involved in scopoletin and umbelliferone biosynthesis. Converts feruloyl CoA into 6'-hydroxyferuloyl CoA, and p-coumaroyl CoA into 2,4-dihydroxycinnamoyl-CoA, but has no activity toward caffeoyl-CoA. The protein is Bi-functional coumaroyl CoA and feruloyl CoA ortho-hydroxylase F6H2-2-1 of Ipomoea batatas (Sweet potato).